A 357-amino-acid chain; its full sequence is Peptide chain release factor 1 (357 aa).

At Gln-233 the chain carries N5-methylglutamine.

The protein belongs to the prokaryotic/mitochondrial release factor family. Methylated by PrmC. Methylation increases the termination efficiency of RF1.

Its subcellular location is the cytoplasm. Peptide chain release factor 1 directs the termination of translation in response to the peptide chain termination codons UAG and UAA. The polypeptide is Peptide chain release factor 1 (Enterococcus faecalis (strain ATCC 700802 / V583)).